Reading from the N-terminus, the 121-residue chain is MVRIVSKQPRKQRKARYNAPNHTRGRFLSAALSPELRGKYNSRRTRVVKGDTVKVLRGDFAGDEGVVDAVDMKACRLVVHGVMVTKADGTEVPRPVDPSNVQITKLNLKDKLREERLGGGA.

Residues 1-30 (MVRIVSKQPRKQRKARYNAPNHTRGRFLSA) form a disordered region.

The protein belongs to the universal ribosomal protein uL24 family. Part of the 50S ribosomal subunit.

Its function is as follows. One of two assembly initiator proteins, it binds directly to the 5'-end of the 23S rRNA, where it nucleates assembly of the 50S subunit. Functionally, located at the polypeptide exit tunnel on the outside of the subunit. The sequence is that of Large ribosomal subunit protein uL24 from Methanoculleus marisnigri (strain ATCC 35101 / DSM 1498 / JR1).